The following is a 37-amino-acid chain: Large ribosomal subunit protein bL36 (37 aa).

It belongs to the bacterial ribosomal protein bL36 family.

The polypeptide is Large ribosomal subunit protein bL36 (Aromatoleum aromaticum (strain DSM 19018 / LMG 30748 / EbN1) (Azoarcus sp. (strain EbN1))).